Consider the following 358-residue polypeptide: Phosphoserine aminotransferase (358 aa).

Arg-41 provides a ligand contact to L-glutamate. Pyridoxal 5'-phosphate contacts are provided by residues 75–76 (AS), Trp-100, Thr-148, Asp-167, and Gln-190. Lys-191 is subject to N6-(pyridoxal phosphate)lysine. 233-234 (NT) lines the pyridoxal 5'-phosphate pocket.

The protein belongs to the class-V pyridoxal-phosphate-dependent aminotransferase family. SerC subfamily. As to quaternary structure, homodimer. Pyridoxal 5'-phosphate serves as cofactor.

It localises to the cytoplasm. The enzyme catalyses O-phospho-L-serine + 2-oxoglutarate = 3-phosphooxypyruvate + L-glutamate. The catalysed reaction is 4-(phosphooxy)-L-threonine + 2-oxoglutarate = (R)-3-hydroxy-2-oxo-4-phosphooxybutanoate + L-glutamate. It participates in amino-acid biosynthesis; L-serine biosynthesis; L-serine from 3-phospho-D-glycerate: step 2/3. Its pathway is cofactor biosynthesis; pyridoxine 5'-phosphate biosynthesis; pyridoxine 5'-phosphate from D-erythrose 4-phosphate: step 3/5. Functionally, catalyzes the reversible conversion of 3-phosphohydroxypyruvate to phosphoserine and of 3-hydroxy-2-oxo-4-phosphonooxybutanoate to phosphohydroxythreonine. The protein is Phosphoserine aminotransferase of Campylobacter lari (strain RM2100 / D67 / ATCC BAA-1060).